The following is a 657-amino-acid chain: N-acetylgalactosaminyltransferase 7 (657 aa).

Residues M1–G6 are Cytoplasmic-facing. The chain crosses the membrane as a helical; Signal-anchor for type II membrane protein span at residues F7 to S29. The disordered stretch occupies residues S30 to F66. Topologically, residues S30–V657 are lumenal. Intrachain disulfides connect C197–C435, C426–C507, C545–C562, C585–C600, and C625–C640. Positions L206–P317 are catalytic subdomain A. Residues D247 and R277 each contribute to the substrate site. Residues D301 and H303 each contribute to the Mn(2+) site. A catalytic subdomain B region spans residues P381 to R443. Residue W412 coordinates substrate. H440 is a Mn(2+) binding site. R443 contributes to the substrate binding site. A Ricin B-type lectin domain is found at V532–N652.

This sequence belongs to the glycosyltransferase 2 family. GalNAc-T subfamily. The cofactor is Mn(2+). As to expression, highly expressed in sublingual gland. Expressed at lower level in stomach, small intestiine and colon.

The protein resides in the golgi apparatus membrane. It catalyses the reaction L-seryl-[protein] + UDP-N-acetyl-alpha-D-galactosamine = a 3-O-[N-acetyl-alpha-D-galactosaminyl]-L-seryl-[protein] + UDP + H(+). The enzyme catalyses L-threonyl-[protein] + UDP-N-acetyl-alpha-D-galactosamine = a 3-O-[N-acetyl-alpha-D-galactosaminyl]-L-threonyl-[protein] + UDP + H(+). Its pathway is protein modification; protein glycosylation. Functionally, glycopeptide transferase involved in O-linked oligosaccharide biosynthesis, which catalyzes the transfer of an N-acetyl-D-galactosamine residue to an already glycosylated peptide. In contrast to other proteins of the family, it does not act as a peptide transferase that transfers GalNAc onto serine or threonine residue on the protein receptor, but instead requires the prior addition of a GalNAc on a peptide before adding additional GalNAc moieties. Some peptide transferase activity is however not excluded, considering that its appropriate peptide substrate may remain unidentified. The sequence is that of N-acetylgalactosaminyltransferase 7 (Galnt7) from Rattus norvegicus (Rat).